We begin with the raw amino-acid sequence, 233 residues long: Orotidine 5'-phosphate decarboxylase (233 aa).

Residues D9, K31, 58–67 (DLKLHDIPNT), T120, R182, Q191, G211, and R212 each bind substrate. K60 serves as the catalytic Proton donor.

Belongs to the OMP decarboxylase family. Type 1 subfamily. In terms of assembly, homodimer.

It catalyses the reaction orotidine 5'-phosphate + H(+) = UMP + CO2. It functions in the pathway pyrimidine metabolism; UMP biosynthesis via de novo pathway; UMP from orotate: step 2/2. Its function is as follows. Catalyzes the decarboxylation of orotidine 5'-monophosphate (OMP) to uridine 5'-monophosphate (UMP). The polypeptide is Orotidine 5'-phosphate decarboxylase (Listeria welshimeri serovar 6b (strain ATCC 35897 / DSM 20650 / CCUG 15529 / CIP 8149 / NCTC 11857 / SLCC 5334 / V8)).